Consider the following 386-residue polypeptide: 2,3,4,5-tetrahydropyridine-2,6-dicarboxylate N-succinyltransferase (386 aa).

Residue glutamate 257 is the Acyl-anhydride intermediate of the active site. Succinyl-CoA is bound by residues arginine 259, glycine 274, serine 277, alanine 300, 315–316 (DA), glycine 323, lysine 349, and 362–365 (RQDS).

The protein belongs to the type 2 tetrahydrodipicolinate N-succinyltransferase family. In terms of assembly, homotrimer.

It is found in the cytoplasm. The catalysed reaction is (S)-2,3,4,5-tetrahydrodipicolinate + succinyl-CoA + H2O = (S)-2-succinylamino-6-oxoheptanedioate + CoA. It functions in the pathway amino-acid biosynthesis; L-lysine biosynthesis via DAP pathway; LL-2,6-diaminopimelate from (S)-tetrahydrodipicolinate (succinylase route): step 1/3. Its function is as follows. Catalyzes the conversion of the cyclic tetrahydrodipicolinate (THDP) into the acyclic N-succinyl-L-2-amino-6-oxopimelate using succinyl-CoA. The sequence is that of 2,3,4,5-tetrahydropyridine-2,6-dicarboxylate N-succinyltransferase from Campylobacter jejuni subsp. jejuni serotype O:2 (strain ATCC 700819 / NCTC 11168).